The following is a 992-amino-acid chain: UvrABC system protein A (992 aa).

The segment covering 1–11 (MPKNSSTTVSS) has biased composition (polar residues). The tract at residues 1–30 (MPKNSSTTVSSAVEAHAGGLASGPGGARSG) is disordered. 62-69 (GLSGSGKS) lines the ATP pocket. A C4-type; atypical zinc finger spans residues 302–330 (CPNGHEQTVDEIEPRSFSFNNPFGACPEC). ABC transporter domains follow at residues 360 to 639 (WSLG…TRSV) and 659 to 988 (PEKG…RFLA). Residue 692 to 699 (GVSGSGKS) participates in ATP binding. A C4-type zinc finger spans residues 791-817 (CEACAGDGTLKIEMNFLPDVYVPCEVC).

It belongs to the ABC transporter superfamily. UvrA family. In terms of assembly, forms a heterotetramer with UvrB during the search for lesions.

Its subcellular location is the cytoplasm. The UvrABC repair system catalyzes the recognition and processing of DNA lesions. UvrA is an ATPase and a DNA-binding protein. A damage recognition complex composed of 2 UvrA and 2 UvrB subunits scans DNA for abnormalities. When the presence of a lesion has been verified by UvrB, the UvrA molecules dissociate. The polypeptide is UvrABC system protein A (Micrococcus luteus (Micrococcus lysodeikticus)).